A 439-amino-acid chain; its full sequence is Trigger factor (439 aa).

The 86-residue stretch at 162–247 folds into the PPIase FKBP-type domain; the sequence is GDTVTIDYVG…IHEVKAKQLP (86 aa).

This sequence belongs to the FKBP-type PPIase family. Tig subfamily.

The protein resides in the cytoplasm. The catalysed reaction is [protein]-peptidylproline (omega=180) = [protein]-peptidylproline (omega=0). Involved in protein export. Acts as a chaperone by maintaining the newly synthesized protein in an open conformation. Functions as a peptidyl-prolyl cis-trans isomerase. The polypeptide is Trigger factor (Lactobacillus delbrueckii subsp. bulgaricus (strain ATCC 11842 / DSM 20081 / BCRC 10696 / JCM 1002 / NBRC 13953 / NCIMB 11778 / NCTC 12712 / WDCM 00102 / Lb 14)).